A 67-amino-acid chain; its full sequence is Small ribosomal subunit protein eS27 (67 aa).

4 residues coordinate Zn(2+): C22, C25, C41, and C44. The segment at 22–44 adopts a C4-type zinc-finger fold; the sequence is CPDCGNEQVVFSHAAMVVRCLVC.

The protein belongs to the eukaryotic ribosomal protein eS27 family. In terms of assembly, part of the 30S ribosomal subunit. It depends on Zn(2+) as a cofactor.

This Pyrobaculum islandicum (strain DSM 4184 / JCM 9189 / GEO3) protein is Small ribosomal subunit protein eS27.